A 425-amino-acid polypeptide reads, in one-letter code: Adenylosuccinate synthetase (425 aa).

Residues 12–18 and 40–42 contribute to the GTP site; these read GDEGKGK and GHT. The active-site Proton acceptor is Asp-13. The Mg(2+) site is built by Asp-13 and Gly-40. Residues 13 to 16, 38 to 41, Thr-126, Arg-140, Gln-221, Thr-236, and Arg-300 each bind IMP; these read DEGK and NAGH. Catalysis depends on His-41, which acts as the Proton donor. 296–302 contacts substrate; the sequence is ATTGRPR. GTP-binding positions include Arg-302, 328-330, and 410-412; these read KLD and STG.

It belongs to the adenylosuccinate synthetase family. Homodimer. It depends on Mg(2+) as a cofactor.

Its subcellular location is the cytoplasm. The enzyme catalyses IMP + L-aspartate + GTP = N(6)-(1,2-dicarboxyethyl)-AMP + GDP + phosphate + 2 H(+). It functions in the pathway purine metabolism; AMP biosynthesis via de novo pathway; AMP from IMP: step 1/2. Plays an important role in the de novo pathway of purine nucleotide biosynthesis. Catalyzes the first committed step in the biosynthesis of AMP from IMP. This chain is Adenylosuccinate synthetase, found in Thermodesulfovibrio yellowstonii (strain ATCC 51303 / DSM 11347 / YP87).